Consider the following 184-residue polypeptide: Putative YfeABCD regulator YfeE (184 aa).

3 helical membrane-spanning segments follow: residues 15–35, 84–104, and 162–182; these read IAGW…IINF, LSAG…GLSL, and ILPS…GIMI.

The protein to E.coli YniB.

It is found in the cell membrane. Putative regulator of YfeABCD, an ABC transporter locus involved in inorganic iron transport. This Yersinia pestis protein is Putative YfeABCD regulator YfeE (yfeE).